The primary structure comprises 180 residues: NAD(P)H-quinone oxidoreductase subunit I, chloroplastic (180 aa).

2 4Fe-4S ferredoxin-type domains span residues 55–84 (GRIH…VDWR) and 95–124 (LNYS…MTEE). The [4Fe-4S] cluster site is built by C64, C67, C70, C74, C104, C107, C110, and C114.

Belongs to the complex I 23 kDa subunit family. As to quaternary structure, NDH is composed of at least 16 different subunits, 5 of which are encoded in the nucleus. The cofactor is [4Fe-4S] cluster.

The protein resides in the plastid. The protein localises to the chloroplast thylakoid membrane. It catalyses the reaction a plastoquinone + NADH + (n+1) H(+)(in) = a plastoquinol + NAD(+) + n H(+)(out). It carries out the reaction a plastoquinone + NADPH + (n+1) H(+)(in) = a plastoquinol + NADP(+) + n H(+)(out). In terms of biological role, NDH shuttles electrons from NAD(P)H:plastoquinone, via FMN and iron-sulfur (Fe-S) centers, to quinones in the photosynthetic chain and possibly in a chloroplast respiratory chain. The immediate electron acceptor for the enzyme in this species is believed to be plastoquinone. Couples the redox reaction to proton translocation, and thus conserves the redox energy in a proton gradient. This Chloranthus spicatus (Chulantree) protein is NAD(P)H-quinone oxidoreductase subunit I, chloroplastic.